The sequence spans 397 residues: Phosphoglycerate kinase (397 aa).

Residues D21 to N23, R36, H59 to R62, R119, and R152 each bind substrate. ATP contacts are provided by residues K202, E324, and G354–T357.

This sequence belongs to the phosphoglycerate kinase family. Monomer.

The protein localises to the cytoplasm. It carries out the reaction (2R)-3-phosphoglycerate + ATP = (2R)-3-phospho-glyceroyl phosphate + ADP. Its pathway is carbohydrate degradation; glycolysis; pyruvate from D-glyceraldehyde 3-phosphate: step 2/5. This Cereibacter sphaeroides (strain ATCC 17029 / ATH 2.4.9) (Rhodobacter sphaeroides) protein is Phosphoglycerate kinase.